The primary structure comprises 1338 residues: Thioester-containing protein 1 allele R1 (1338 aa).

The first 21 residues, 1–21, serve as a signal peptide directing secretion; sequence MWQFIRSRILTVIIFIGAAHG. N-linked (GlcNAc...) asparagine glycans are attached at residues Asn-68, Asn-199, Asn-242, Asn-312, and Asn-481. Residues 580-609 are may contain the cleavage site; sequence ENEFDIFHSLGLFARTLDDILFDSANEKTG. Asn-637, Asn-728, and Asn-813 each carry an N-linked (GlcNAc...) asparagine glycan. The segment at residues 859-862 is a cross-link (isoglutamyl cysteine thioester (Cys-Gln)); that stretch reads CGEQ. Residues Asn-919 and Asn-1065 are each glycosylated (N-linked (GlcNAc...) asparagine). Cystine bridges form between Cys-1217-Cys-1283, Cys-1326-Cys-1338, and Cys-1329-Cys-1334.

In terms of assembly, heterodimer of a TEP1-N chain and an TEP1-C chain non-covalently linked. Forms a complex composed of TEP1-N and TEP1-C heterodimer, LRIM1 and APL1C; the interaction stabilizes TEP1-N and TEP1-C heterodimer, prevents its binding to tissues while circulating in the hemolymph and protects the thioester bond from hydrolysis. Mature TEP1 and to a lesser extent full-length TEP1 interact with SPCLIP1; the interaction is induced by microbial infection. Post-translationally, in the hemolymph, the full-length protein is cleaved by an unknow protease into a 75kDa N-terminal (TEP1-N) chain and an 80kDa C-terminal (TEP1-C) chain which remain non-covalently linked. The TEP1-C chain contains the thioester bond which covalently binds to the pathogen surface. Cleavage is induced by bacterial infection or aseptic wound injury. During embryonic and pupal development, the cleaved form is the predominant form. In terms of processing, N-glycosylated.

It localises to the secreted. Functionally, plays an essential role in the innate immune response against bacteria, fungi and protozoa infection. After proteolytic cleavage, the protein C-terminus binds covalently through a thioester bond to the pathogen surface resulting in pathogen clearance either by melanization or lysis. Initiate the recruitment and activation of a cascade of proteases, mostly of CLIP-domain serine proteases, which leads to the proteolytic cleavage of the prophenoloxidase (PPO) into active phenoloxidase (PO), the rate-limiting enzyme in melanin biosynthesis. In response to parasite P.berghei-mediated infection, binds to and mediates killing of ookinetes, as they egress from midgut epithelial cells into the basal labyrinth, by both lysis and melanization. During bacterial infection, binds to both Gram-positive and Gram-negative bacteria but only promotes phagocytosis of Gram-negative bacteria. Promotes the accumulation of SPCLIP1 onto the surface of P.berghei ookinetes and bacterium E.coli which leads to the melanization of the pathogen. Recruits CLIPA2 to bacteria surface. In response to bacterial infection, required for periostial hemocyte aggregation, but not for the aggregation of sessile hemocytes in non-periostial regions. During the late stage of fungus B.bassiana-mediated infection, required for the initiation of hyphae melanization by binding to the surface of hyphae and recruiting prophenoloxidase PPO to them. Plays a role in male fertility by binding to defective sperm cells and promoting their removal during spermatogenesis. Its function is as follows. Binds to and mediates killing of parasite P.bergei ookinetes by lysis and melanization. In terms of biological role, binds covalently through a thioester bond to the pathogen surface resulting in pathogen clearance. The sequence is that of Thioester-containing protein 1 allele R1 from Anopheles gambiae (African malaria mosquito).